The following is a 231-amino-acid chain: Cytidylate kinase (231 aa).

Residue 18 to 26 coordinates ATP; that stretch reads GPSGTGKSS.

Belongs to the cytidylate kinase family. Type 1 subfamily.

The protein resides in the cytoplasm. The enzyme catalyses CMP + ATP = CDP + ADP. It carries out the reaction dCMP + ATP = dCDP + ADP. The chain is Cytidylate kinase from Streptomyces coelicolor (strain ATCC BAA-471 / A3(2) / M145).